We begin with the raw amino-acid sequence, 263 residues long: Taurine import ATP-binding protein TauB (263 aa).

One can recognise an ABC transporter domain in the interval 4-235 (LTAEAISLSF…RYAAGETVRS (232 aa)). Position 40–47 (40–47 (GPSGCGKS)) interacts with ATP.

The protein belongs to the ABC transporter superfamily. Taurine importer (TC 3.A.1.17.1) family. As to quaternary structure, the complex is composed of two ATP-binding proteins (TauB), two transmembrane proteins (TauC) and a solute-binding protein (TauA).

The protein localises to the cell inner membrane. The catalysed reaction is taurine(out) + ATP + H2O = taurine(in) + ADP + phosphate + H(+). Functionally, part of the ABC transporter complex TauABC involved in taurine import. Responsible for energy coupling to the transport system. The sequence is that of Taurine import ATP-binding protein TauB from Pseudomonas aeruginosa (strain UCBPP-PA14).